Here is a 311-residue protein sequence, read N- to C-terminus: L-lactate dehydrogenase 2 (311 aa).

NAD(+)-binding residues include Val-14, Asp-35, and Arg-40. Residue Arg-90 participates in substrate binding. NAD(+)-binding positions include Ser-103, 120 to 122, and Thr-145; that span reads ATN. Residue 122 to 125 coordinates substrate; the sequence is NPCD. 150–153 lines the substrate pocket; it reads DTTR. Catalysis depends on His-177, which acts as the Proton acceptor. Thr-230 is a substrate binding site.

This sequence belongs to the LDH/MDH superfamily. LDH family. Homotetramer.

Its subcellular location is the cytoplasm. It carries out the reaction (S)-lactate + NAD(+) = pyruvate + NADH + H(+). It participates in fermentation; pyruvate fermentation to lactate; (S)-lactate from pyruvate: step 1/1. Functionally, catalyzes the conversion of lactate to pyruvate. This Listeria monocytogenes serotype 4b (strain F2365) protein is L-lactate dehydrogenase 2.